Reading from the N-terminus, the 270-residue chain is Release factor glutamine methyltransferase (270 aa).

S-adenosyl-L-methionine is bound by residues 113 to 117 (GTGSG), Asp136, and Asn177. Residue 177 to 180 (NPPY) participates in substrate binding.

The protein belongs to the protein N5-glutamine methyltransferase family. PrmC subfamily.

It carries out the reaction L-glutaminyl-[peptide chain release factor] + S-adenosyl-L-methionine = N(5)-methyl-L-glutaminyl-[peptide chain release factor] + S-adenosyl-L-homocysteine + H(+). Methylates the class 1 translation termination release factors RF1/PrfA and RF2/PrfB on the glutamine residue of the universally conserved GGQ motif. The protein is Release factor glutamine methyltransferase of Lactococcus lactis subsp. lactis (strain IL1403) (Streptococcus lactis).